Reading from the N-terminus, the 366-residue chain is Quinolinate synthase (366 aa).

Iminosuccinate contacts are provided by H44 and S61. Residue C108 coordinates [4Fe-4S] cluster. Residues 139-141 and S160 each bind iminosuccinate; that span reads YIN. [4Fe-4S] cluster is bound at residue C228. Iminosuccinate-binding positions include 254–256 and T271; that span reads HPE. Residue C318 coordinates [4Fe-4S] cluster.

It belongs to the quinolinate synthase family. Type 3 subfamily. Requires [4Fe-4S] cluster as cofactor.

It localises to the cytoplasm. It catalyses the reaction iminosuccinate + dihydroxyacetone phosphate = quinolinate + phosphate + 2 H2O + H(+). Its pathway is cofactor biosynthesis; NAD(+) biosynthesis; quinolinate from iminoaspartate: step 1/1. In terms of biological role, catalyzes the condensation of iminoaspartate with dihydroxyacetone phosphate to form quinolinate. This is Quinolinate synthase from Listeria monocytogenes serotype 4b (strain F2365).